The following is a 369-amino-acid chain: MAFAGLKKQINKANQYVTEKMGGAEGTKLDLDFMDMERKTDVTVELVEELQLKTKEFLQPNPTARAKMAAVKGISKLSGQAKSNTYPQPEGLLAECMLTYGKKLGEDNSVFAQALVEFGEALKQMADVKYSLDDNIKQNFLEPLHHMQTKDLKEVMHHRKKLQGRRLDFDCKRRRQAKDDEIRGAEDKFAESLQLAQVGMFNLLENDTEHVSQLVTFAEALYDFHSQCADVLRGLQETLQEKRAEAESRPRNEFVPKTLLDLNLDGGGGGLIDDGTPSHISSSASPLPSPMRSPAKSMAVTPNRQQQPCCQALYDFDPENPGELGFKENDIITLLNRVDDNWYEGAVNGRTGYFPQSYVQVQVPLPNGN.

In terms of domain architecture, BAR spans 18–248 (TEKMGGAEGT…LQEKRAEAES (231 aa)). A coiled-coil region spans residues 227–249 (QCADVLRGLQETLQEKRAEAESR). Residues 275 to 294 (GTPSHISSSASPLPSPMRSP) are compositionally biased toward low complexity. The tract at residues 275 to 297 (GTPSHISSSASPLPSPMRSPAKS) is disordered. In terms of domain architecture, SH3 spans 305 to 364 (QQQPCCQALYDFDPENPGELGFKENDIITLLNRVDDNWYEGAVNGRTGYFPQSYVQVQVP).

Belongs to the endophilin family.

The protein resides in the cytoplasm. It localises to the membrane. Required presynaptically at the neuromuscular junction. Implicated in synaptic vesicle endocytosis. This Drosophila virilis (Fruit fly) protein is Endophilin-A.